Here is a 1013-residue protein sequence, read N- to C-terminus: MTRILNCLLVLLACLGVSSKAEDQAVTQWPLQDNGLNTVVQWDHYSFQINGQRIFIFSGEFHYWRIPVPALWRDILEKIKAAGFTAFAFYSSWAYHAPNNATVDFTTGARDITPIFELAKELGMYIIVRPGPYVNAEANAGGFPLWVTTGDYGTLRNDDTRYTNAWTPYFTEVTEITSRYQVTDGHYSIVYQIENEYGNQWLGDPTLRVPNETAIAYMELLKANARDNGITLPLTVNDPNMKTHSWGKDWSDAGGNVDVAGLDSYPSCWTCDISQCTSTNGAYVPFQVLEYHDYFQESQPSMPAFMPEFQGGSYNPWGGPEGGCPGDIGDDFANLFYRWNIGQRVTAMSLYMMFGGQNPGAMAAPVTASSYDYSAPISEDRSIWSKYHETKLLALFTRSAKDLTMTELMGNGTQYTDNPAVRAYELRNPETNSAFYATFHSNTSISTNEPFHLKVNTSAGVLTVPKYASTIRLNGHQSKIIVTDFTFGSKSLLYSTAEVLTYAVFDKKPTLVLWVPTGESGEFSIKGAKKGSIKKCQGCSRVKFIKEHGGLTTSLTQSAGMTVLEFDDGVRVILLDRTSAYDFWAPALTNDPFVPETESVLIQGPYLVRDAKLSGSKLAITGDVVNATTLDVFAPKGVKSVTWNGKKVDTHSTEYGSLKGSLDAPQSIKLPALASWKSKDSLPERFADYDDSGAAWVDANHMTTLNPRTPTSLPVLYADQYGFHNGVRLWRGYFNGTATGAFINVQGGSAFGWSAWLNGEFLASHLGNATTSQANLSLSFTDATLHTDTPNVLLIVHDDTGHDQTTGALNPRGIMDAKLLGSDSGFTHWRLAGTAGGESDLDPVRGVYNEDGLFAERVGWHLPGFDDSDWGEEGSAKDSTTSVLSFEGATVRFFRTTCPLDIPAHTDVSISFVLSTPAGATTEYRAQLFVNGYQYGRYNPYIGNQVVYPVPVGILDYKGENTIGVAVWAQSEEGASIGIDWRVNYLADSSLDVASWDTKDLRPGWTEERVKYA.

Residues 1–21 (MTRILNCLLVLLACLGVSSKA) form the signal peptide. Tyr-90 is a substrate binding site. An N-linked (GlcNAc...) asparagine glycan is attached at Asn-100. Substrate contacts are provided by Asn-135, Ala-136, Glu-137, and Asn-195. Glu-196 serves as the catalytic Proton donor. Asn-211 carries N-linked (GlcNAc...) asparagine glycosylation. Position 265 (Tyr-265) interacts with substrate. Cys-271 and Cys-324 form a disulfide bridge. The Nucleophile role is filled by Glu-308. Tyr-373 is a binding site for substrate. Asn-411, Asn-442, Asn-456, Asn-626, Asn-735, Asn-768, and Asn-775 each carry an N-linked (GlcNAc...) asparagine glycan.

Belongs to the glycosyl hydrolase 35 family.

It localises to the secreted. It carries out the reaction Hydrolysis of terminal non-reducing beta-D-galactose residues in beta-D-galactosides.. Its function is as follows. Cleaves beta-linked terminal galactosyl residues from gangliosides, glycoproteins, and glycosaminoglycans. In Penicillium rubens (strain ATCC 28089 / DSM 1075 / NRRL 1951 / Wisconsin 54-1255) (Penicillium chrysogenum), this protein is Probable beta-galactosidase B (lacB).